Consider the following 245-residue polypeptide: Cypemycin N-terminal methyltransferase (245 aa).

The protein belongs to the methyltransferase superfamily.

It carries out the reaction N-terminal L-alanyl-[cypemycin] + 2 S-adenosyl-L-methionine = N-terminal N,N-dimethyl-L-alanyl-[cypemycin] + 2 S-adenosyl-L-homocysteine + 3 H(+). In terms of biological role, involved in the biosynthesis of the lanaridin cypemycin. The enzyme can methylate a variety of oligopeptides, cyclic peptides and the epsilon-amino group of lysine. The protein is Cypemycin N-terminal methyltransferase of Streptomyces sp.